The sequence spans 515 residues: Na(+)/H(+) antiporter NhaB (515 aa).

The next 13 helical transmembrane spans lie at 23–43 (IIVF…FIAG), 44–64 (WCLV…YPLQ), 88–108 (IMAS…IYFM), 119–139 (LLIT…SAAF), 143–163 (FLDA…FYGV), 202–222 (LMMH…VGEP), 238–258 (FFIR…ITCV), 303–323 (GIIG…VGLI), 324–344 (GLSV…STIG), 357–377 (LVVF…GPII), 389–409 (LLLF…VFVA), 447–467 (ATPN…APLI), and 477–497 (MALP…EYIL).

This sequence belongs to the NhaB Na(+)/H(+) (TC 2.A.34) antiporter family.

Its subcellular location is the cell inner membrane. The enzyme catalyses 2 Na(+)(in) + 3 H(+)(out) = 2 Na(+)(out) + 3 H(+)(in). Na(+)/H(+) antiporter that extrudes sodium in exchange for external protons. The chain is Na(+)/H(+) antiporter NhaB from Mannheimia succiniciproducens (strain KCTC 0769BP / MBEL55E).